A 168-amino-acid chain; its full sequence is Acetone carboxylase gamma subunit (168 aa).

In terms of assembly, heterohexamer of two alpha, two beta and two gamma subunits. Fe cation is required as a cofactor. Requires Mg(2+) as cofactor. Zn(2+) serves as cofactor.

The catalysed reaction is acetone + hydrogencarbonate + 2 ATP + 3 H2O = acetoacetate + 2 AMP + 4 phosphate + 4 H(+). Its function is as follows. Catalyzes the carboxylation of acetone to form acetoacetate. Has a reduced activity on butanone, and no activity on 2-pentatone, 3-pentatone, 2-hexanone, chloroacetone, pyruvate, phosphoenolpyruvate, acetaldehyde, propionaldehyde and propylene oxide. The chain is Acetone carboxylase gamma subunit from Xanthobacter autotrophicus (strain ATCC BAA-1158 / Py2).